Here is a 1042-residue protein sequence, read N- to C-terminus: Elongation factor 3 (1042 aa).

HEAT repeat units follow at residues 9 to 46, 86 to 124, 167 to 204, 206 to 242, 243 to 280, and 289 to 327; these read KVLM…DPDT, PYLV…TMNP, YRLP…LISN, DIDK…EVHA, STLS…LVED, and PKLI…VKEG. 2 consecutive ABC transporter domains span residues 425–642 and 668–994; these read EEGE…YQDI and CRMR…EQEE. Positions 704, 923, 926, and 952 each coordinate ADP. Residues 1009 to 1042 are disordered; that stretch reads KKAKKLTSSELRKKKKERMARRKKGEEVFSDEDD. A compositionally biased stretch (basic residues) spans 1020–1031; it reads RKKKKERMARRK.

The protein belongs to the ABC transporter superfamily. ABCF family. EF3 subfamily. In terms of assembly, monomer.

Its subcellular location is the cytoplasm. The catalysed reaction is ATP + H2O = ADP + phosphate + H(+). Its pathway is protein biosynthesis; polypeptide chain elongation. In terms of biological role, ribosome-dependent ATPase that functions in cytoplasmic translation elongation. Required for the ATP-dependent release of deacylated tRNA from the ribosomal E-site during protein biosynthesis. Stimulates the eEF1A-dependent binding of aminoacyl-tRNA to the ribosomal A-site, which has reduced affinity for tRNA as long as the E-site is occupied. Assists translation termination by stimulating the release of nascent protein from the ribosome by release factors. The protein is Elongation factor 3 (TEF3) of Pneumocystis carinii.